The primary structure comprises 164 residues: MRHRTGFNPLSCMAAHRRALRRNMVTSLFKFERITTTKPKAAEVRRAAERLITRSKSDSVHNRRQVARFIWDKAVLHKLFADIGPRMREREGGYTRILKLGLRQGDAAHVVVLELVDYTFEKSLKKRARTDSVPARKGAGKKDASRVSGTVPDGQSQKIGKKKE.

The segment at 127–164 (RARTDSVPARKGAGKKDASRVSGTVPDGQSQKIGKKKE) is disordered.

Belongs to the bacterial ribosomal protein bL17 family. As to quaternary structure, part of the 50S ribosomal subunit. Contacts protein L32.

The protein is Large ribosomal subunit protein bL17 of Treponema pallidum (strain Nichols).